A 474-amino-acid polypeptide reads, in one-letter code: MSQPKRYEAGVKEYRETYWEPTYVPKDSDFLAVFKIVPQPGVPREESAAAVAAESSTATWTTVWTDLLTDLYYYKGRAYAIEDVPGDDEAFYAFIAYPMGLFEEGSVVNVFTSLVGNVFGFKAVRSLRLEDVRIPLWFVTTCPGPPHGIYVERDKLNKYGRPLLGCTIKPKLGLSAKNYGRAVYECLRGGLDFTKDDENVNSQPFMRWRDRFLFCQEAIEKAQAETGERKGHYMNVTGPTMEEIYKRAEFAKEIGTPIIMIDYLTVGWAATQSLSKWCRDNGMLLHVHRAMHAVIDRNPKHGINFRVLAKIMRLIGGDHLHSGTVVGKLEGDRAATLGWIDLMRDRYVKADRSRGIFFDQDWGQMPGMFPVASGGIHVWHMPALVSIFGDDSVLQFGGGTIGHPWGNAAGACANRVALEACVKARNEGLPIEKMGREILTEAAKSCPELKVAMETWKEVKFDFDTVDKLDVQHR.

Substrate is bound by residues asparagine 117 and threonine 167. The active-site Proton acceptor is lysine 169. Lysine 171 contacts substrate. Residues lysine 195, aspartate 197, and glutamate 198 each contribute to the Mg(2+) site. Position 195 is an N6-carboxylysine (lysine 195). Histidine 288 (proton acceptor) is an active-site residue. 3 residues coordinate substrate: arginine 289, histidine 321, and serine 373.

It belongs to the RuBisCO large chain family. Type I subfamily. As to quaternary structure, heterohexadecamer of 8 large chains and 8 small chains. Mg(2+) is required as a cofactor.

It catalyses the reaction 2 (2R)-3-phosphoglycerate + 2 H(+) = D-ribulose 1,5-bisphosphate + CO2 + H2O. The enzyme catalyses D-ribulose 1,5-bisphosphate + O2 = 2-phosphoglycolate + (2R)-3-phosphoglycerate + 2 H(+). In terms of biological role, ruBisCO catalyzes two reactions: the carboxylation of D-ribulose 1,5-bisphosphate, the primary event in carbon dioxide fixation, as well as the oxidative fragmentation of the pentose substrate. Both reactions occur simultaneously and in competition at the same active site. The sequence is that of Ribulose bisphosphate carboxylase large chain from Hydrogenophilus thermoluteolus (Pseudomonas hydrogenothermophila).